The sequence spans 86 residues: UPF0457 protein SERP1772 (86 aa).

Belongs to the UPF0457 family.

The chain is UPF0457 protein SERP1772 from Staphylococcus epidermidis (strain ATCC 35984 / DSM 28319 / BCRC 17069 / CCUG 31568 / BM 3577 / RP62A).